Reading from the N-terminus, the 435-residue chain is Probable exopolygalacturonase B (435 aa).

An N-terminal signal peptide occupies residues 1–15 (MKFFLATLFASAVSS). N-linked (GlcNAc...) asparagine glycosylation is found at Asn-59, Asn-184, and Asn-224. 5 PbH1 repeats span residues 208 to 239 (SKDVSFDDVYIHAFSTNKSALPKNSDGFDSLN), 240 to 261 (VDGLTVTNTRVDVGDDCFSPKP), 262 to 283 (NTTNIFVQNLLCNNTHGVSMGS), 294 to 315 (IEHAYIENVTLLNGQNGARLKA), and 326 to 347 (INNITYKNIRIENTDAPVVLDQ). The active-site Proton donor is Asp-254. A disulfide bridge connects residues Cys-256 and Cys-273. N-linked (GlcNAc...) asparagine glycosylation is found at Asn-262 and Asn-274. His-277 is an active-site residue. N-linked (GlcNAc...) asparagine glycans are attached at residues Asn-301, Asn-328, Asn-365, and Asn-373. Residues 366 to 388 (VTNILFENISGTSSGKNGKVVAD) form a PbH1 6 repeat. Cys-391 and Cys-397 are oxidised to a cystine. N-linked (GlcNAc...) asparagine glycosylation occurs at Asn-406.

Belongs to the glycosyl hydrolase 28 family.

The protein localises to the secreted. It carries out the reaction [(1-&gt;4)-alpha-D-galacturonosyl](n) + H2O = alpha-D-galacturonate + [(1-&gt;4)-alpha-D-galacturonosyl](n-1). Functionally, specific in hydrolyzing the terminal glycosidic bond of polygalacturonic acid and oligogalacturonates. This Aspergillus flavus (strain ATCC 200026 / FGSC A1120 / IAM 13836 / NRRL 3357 / JCM 12722 / SRRC 167) protein is Probable exopolygalacturonase B (pgxB).